The chain runs to 195 residues: Imidazoleglycerol-phosphate dehydratase (195 aa).

This sequence belongs to the imidazoleglycerol-phosphate dehydratase family.

It localises to the cytoplasm. The catalysed reaction is D-erythro-1-(imidazol-4-yl)glycerol 3-phosphate = 3-(imidazol-4-yl)-2-oxopropyl phosphate + H2O. Its pathway is amino-acid biosynthesis; L-histidine biosynthesis; L-histidine from 5-phospho-alpha-D-ribose 1-diphosphate: step 6/9. In Dechloromonas aromatica (strain RCB), this protein is Imidazoleglycerol-phosphate dehydratase.